Consider the following 76-residue polypeptide: DNA polymerase III subunit theta (76 aa).

In terms of assembly, the DNA polymerase holoenzyme is a complex that contains 10 different types of subunits. These subunits are organized into 3 functionally essential subassemblies: the pol III core, the beta sliding clamp processivity factor and the clamp-loading complex. The pol III core (subunits alpha,epsilon and theta) contains the polymerase and the 3'-5' exonuclease proofreading activities. The polymerase is tethered to the template via the sliding clamp processivity factor. The clamp-loading complex assembles the beta processivity factor onto the primer template and plays a central role in the organization and communication at the replication fork. This complex contains delta, delta', psi and chi, and copies of either or both of two different DnaX proteins, gamma and tau. The composition of the holoenzyme is, therefore: (alpha,epsilon,theta)[2]-(gamma/tau)[3]-delta,delta', psi,chi-beta[4].

It catalyses the reaction DNA(n) + a 2'-deoxyribonucleoside 5'-triphosphate = DNA(n+1) + diphosphate. Functionally, DNA polymerase III is a complex, multichain enzyme responsible for most of the replicative synthesis in bacteria. This DNA polymerase also exhibits 3' to 5' exonuclease activity. The exact function of the theta subunit is unknown. This is DNA polymerase III subunit theta (holE) from Escherichia coli O157:H7.